A 378-amino-acid chain; its full sequence is Prolargin (378 aa).

A signal peptide spans 1 to 21 (MRASFFWLLPLLLILASVAQG). The disordered stretch occupies residues 22–62 (QPTRPKPGIRRKPKPRPTPRFPQAPEPAEPTDLPPPLPPGP). The span at 28–38 (PGIRRKPKPRP) shows a compositional bias: basic residues. Residues 39 to 62 (TPRFPQAPEPAEPTDLPPPLPPGP) show a composition bias toward pro residues. 12 LRR repeats span residues 91–110 (RRVP…NNFI), 111–134 (TELP…NNRI), 135–158 (RKVD…KNQL), 159–179 (EEVP…QNLI), 180–203 (SRIP…HNRL), 204–229 (SDGV…HNIL), 230–250 (RKMP…SNKI), 251–274 (ETIP…YNKL), 275–299 (SDRG…HNKI), 300–319 (SNVP…NNSI), 320–358 (EKIN…GNFL), and 359–378 (KPPI…SVVI). An N-linked (GlcNAc...) asparagine glycan is attached at N120. N285, N316, and N323 each carry an N-linked (GlcNAc...) asparagine glycan. C328 and C369 are oxidised to a cystine.

The protein belongs to the small leucine-rich proteoglycan (SLRP) family. SLRP class II subfamily. Binds the basement membrane heparan sulfate proteoglycan perlecan and triple helical collagens type I and type II. Post-translationally, glycosylated; contains heparan sulfate. In terms of tissue distribution, expressed in cartilage throughout both fetal development and postnatal life. It is also expressed in the developing embryo prior to skeletogenesis. In adult, highest expression in lung, lower levels in cardiac and skeletal muscle.

It is found in the secreted. The protein resides in the extracellular space. The protein localises to the extracellular matrix. Functionally, may anchor basement membranes to the underlying connective tissue. The protein is Prolargin (Prelp) of Mus musculus (Mouse).